A 439-amino-acid polypeptide reads, in one-letter code: Xylose isomerase (439 aa).

Active-site residues include H101 and D104. The Mg(2+) site is built by E232, E268, H271, D296, D307, D309, and D339.

This sequence belongs to the xylose isomerase family. As to quaternary structure, homotetramer. Requires Mg(2+) as cofactor.

The protein resides in the cytoplasm. The enzyme catalyses alpha-D-xylose = alpha-D-xylulofuranose. This chain is Xylose isomerase, found in Pseudoalteromonas atlantica (strain T6c / ATCC BAA-1087).